Here is a 379-residue protein sequence, read N- to C-terminus: Probable G-protein coupled receptor 27 (379 aa).

Topologically, residues 1–26 (MANASEPGGGGSGGGAEAAALGLRLA) are extracellular. Asn-3 carries N-linked (GlcNAc...) asparagine glycosylation. A helical transmembrane segment spans residues 27–47 (TLSLLLCVSLAGNVLFALLIV). Residues 48 to 58 (RERSLHRAPYY) lie on the Cytoplasmic side of the membrane. The chain crosses the membrane as a helical span at residues 59–79 (LLLDLCLADGLRALACLPAVM). The Extracellular portion of the chain corresponds to 80-100 (LAARRAAAAAGTPPGALGCKL). Cys-98 and Cys-175 are oxidised to a cystine. A helical membrane pass occupies residues 101–121 (LAFLAALFCFHAAFLLLGVGV). The Cytoplasmic segment spans residues 122–142 (TRYLAIAHHRFYAERLAGWPC). The helical transmembrane segment at 143-163 (AAMLVCAAWALALAAAFPPVL) threads the bilayer. Residues 164 to 185 (DGGGADDEDAPCALEQRPDGAP) are Extracellular-facing. Residues 186–206 (GALGFLLLLAAVVGATHLVYL) form a helical membrane-spanning segment. At 207-289 (RLLFFIHDRR…FKTEKRLCKM (83 aa)) the chain is on the cytoplasmic side. The helical transmembrane segment at 290–310 (FYAITLLFLLLWGPYVVASYL) threads the bilayer. Topologically, residues 311–324 (RVLVRPGAVPQAYL) are extracellular. Residues 325–345 (TASVWLTFAQAGINPVVCFLF) traverse the membrane as a helical segment. At 346–379 (NRELRDCFRAQFPCCQSPQATQATLPCDLKGIGL) the chain is on the cytoplasmic side.

It belongs to the G-protein coupled receptor 1 family.

Its subcellular location is the cell membrane. Orphan receptor. Possible candidate for amine-like G-protein coupled receptor. This chain is Probable G-protein coupled receptor 27 (Gpr27), found in Mus musculus (Mouse).